A 638-amino-acid chain; its full sequence is DEAD-box ATP-dependent RNA helicase 52B (638 aa).

Low complexity-rich tracts occupy residues 1-21 and 40-67; these read MRSS…AAAA and GQAA…VGQP. Residues 1–129 form a disordered region; it reads MRSSWADSAA…WDRRDREPDP (129 aa). A compositionally biased stretch (gly residues) spans 79–112; that stretch reads VNGGGGGGGGSVGGSRQGFGAGGRGGGGGGGGGA. The span at 119–128 shows a compositional bias: basic and acidic residues; it reads GWDRRDREPD. The Q motif signature appears at 169-197; sequence NTFAEIDLGDALNENIRRCKYVKPTPVQR. Positions 200–384 constitute a Helicase ATP-binding domain; that stretch reads IPISIAGRDL…SDFLADYIFL (185 aa). Residue 213 to 220 participates in ATP binding; it reads AQTGSGKT. A DEAD box motif is present at residues 328–331; the sequence is DEAD. A Helicase C-terminal domain is found at 411 to 562; sequence YLMDLLHAQR…EVPQWLERYA (152 aa). The interval 565–638 is disordered; it reads SSFGGGGGRN…GGQGFSSAWD (74 aa). Positions 567-583 are enriched in gly residues; the sequence is FGGGGGRNRRSGGGARF. Basic and acidic residues predominate over residues 584–593; that stretch reads GGRDFRRDRG. Over residues 594–632 the composition is skewed to gly residues; sequence SGGGGYGGGGGGYGGGGYGGGGGGGGYGGGSSYGGGGQG.

This sequence belongs to the DEAD box helicase family. DDX3/DED1 subfamily.

It catalyses the reaction ATP + H2O = ADP + phosphate + H(+). This chain is DEAD-box ATP-dependent RNA helicase 52B (PL10B), found in Oryza sativa subsp. japonica (Rice).